The chain runs to 303 residues: Ribosomal protein L11 methyltransferase (303 aa).

4 residues coordinate S-adenosyl-L-methionine: Thr-144, Gly-165, Asp-187, and Asn-235.

It belongs to the methyltransferase superfamily. PrmA family.

The protein resides in the cytoplasm. The catalysed reaction is L-lysyl-[protein] + 3 S-adenosyl-L-methionine = N(6),N(6),N(6)-trimethyl-L-lysyl-[protein] + 3 S-adenosyl-L-homocysteine + 3 H(+). Its function is as follows. Methylates ribosomal protein L11. This Prochlorococcus marinus (strain MIT 9301) protein is Ribosomal protein L11 methyltransferase.